A 191-amino-acid polypeptide reads, in one-letter code: Small ribosomal subunit protein uS4A (191 aa).

A phosphoserine mark is found at S50 and S161. Positions R107–E181 constitute an S4 RNA-binding domain. Y164 bears the Phosphotyrosine mark. Residues G166–E191 are disordered. Position 179 is a phosphoserine (S179).

The protein belongs to the universal ribosomal protein uS4 family. Component of the small ribosomal subunit (SSU). Mature yeast ribosomes consist of a small (40S) and a large (60S) subunit. The 40S small subunit contains 1 molecule of ribosomal RNA (18S rRNA) and at least 33 different proteins. The large 60S subunit contains 3 rRNA molecules (25S, 5.8S and 5S rRNA) and at least 46 different proteins. Interacts with snoRNA U3. uS11 interacts with MPP10. Component of the ribosomal small subunit (SSU) processome composed of at least 40 protein subunits and snoRNA U3.

It is found in the cytoplasm. In terms of biological role, component of the ribosome, a large ribonucleoprotein complex responsible for the synthesis of proteins in the cell. The small ribosomal subunit (SSU) binds messenger RNAs (mRNAs) and translates the encoded message by selecting cognate aminoacyl-transfer RNA (tRNA) molecules. The large subunit (LSU) contains the ribosomal catalytic site termed the peptidyl transferase center (PTC), which catalyzes the formation of peptide bonds, thereby polymerizing the amino acids delivered by tRNAs into a polypeptide chain. The nascent polypeptides leave the ribosome through a tunnel in the LSU and interact with protein factors that function in enzymatic processing, targeting, and the membrane insertion of nascent chains at the exit of the ribosomal tunnel. uS4 is involved in nucleolar processing of pre-18S ribosomal RNA and ribosome assembly. This Schizosaccharomyces pombe (strain 972 / ATCC 24843) (Fission yeast) protein is Small ribosomal subunit protein uS4A (rps901).